Here is a 287-residue protein sequence, read N- to C-terminus: Ribosomal RNA small subunit methyltransferase A (287 aa).

6 residues coordinate S-adenosyl-L-methionine: Asn28, Leu30, Gly55, Glu77, Asp103, and Asn123.

The protein belongs to the class I-like SAM-binding methyltransferase superfamily. rRNA adenine N(6)-methyltransferase family. RsmA subfamily.

Its subcellular location is the cytoplasm. The catalysed reaction is adenosine(1518)/adenosine(1519) in 16S rRNA + 4 S-adenosyl-L-methionine = N(6)-dimethyladenosine(1518)/N(6)-dimethyladenosine(1519) in 16S rRNA + 4 S-adenosyl-L-homocysteine + 4 H(+). Specifically dimethylates two adjacent adenosines (A1518 and A1519) in the loop of a conserved hairpin near the 3'-end of 16S rRNA in the 30S particle. May play a critical role in biogenesis of 30S subunits. The chain is Ribosomal RNA small subunit methyltransferase A from Rhodopseudomonas palustris (strain HaA2).